The chain runs to 263 residues: MGQKIHPTGFRLAVTRNWTSRWFADDKAFGTMLAEDIRVREYLKKKLKSASVGRVIIERPAKNARITVYSARPGVVIGKRGEDIENLKADLQRLMGVPVHVNIEEIRKPETDAQLIADSISQQLEKRIMFRRAMKRAMQNAMRLGAQGIKIMSSGRLNGIEIARTEWYREGRVPLHTLKANIDYGTSEAHTTYGVIGIKVWVYKGDMLANGELPPEAATPREEERRPRRAPRGDRPDGARTGRPGGRGRGPRKADAAPAPEGE.

Positions 39–107 (VREYLKKKLK…PVHVNIEEIR (69 aa)) constitute a KH type-2 domain. The disordered stretch occupies residues 211 to 263 (GELPPEAATPREEERRPRRAPRGDRPDGARTGRPGGRGRGPRKADAAPAPEGE). A compositionally biased stretch (basic and acidic residues) spans 219 to 240 (TPREEERRPRRAPRGDRPDGAR).

It belongs to the universal ribosomal protein uS3 family. In terms of assembly, part of the 30S ribosomal subunit. Forms a tight complex with proteins S10 and S14.

In terms of biological role, binds the lower part of the 30S subunit head. Binds mRNA in the 70S ribosome, positioning it for translation. The protein is Small ribosomal subunit protein uS3 of Bordetella pertussis (strain Tohama I / ATCC BAA-589 / NCTC 13251).